A 360-amino-acid polypeptide reads, in one-letter code: Phospho-N-acetylmuramoyl-pentapeptide-transferase (360 aa).

Helical transmembrane passes span 21 to 41 (YLTL…LWLG), 73 to 93 (TMGG…WGDL), 94 to 114 (TNHY…IGWV), 145 to 165 (AVTL…VPLF), 168 to 188 (VVVP…VGSS), 199 to 219 (GLAI…AYAS), 236 to 256 (AGEL…FLWF), 263 to 283 (VFMG…VAVI), 288 to 308 (IVLF…MLQV), and 339 to 359 (IVRF…TLKI).

Belongs to the glycosyltransferase 4 family. MraY subfamily. The cofactor is Mg(2+).

It localises to the cell inner membrane. The enzyme catalyses UDP-N-acetyl-alpha-D-muramoyl-L-alanyl-gamma-D-glutamyl-meso-2,6-diaminopimeloyl-D-alanyl-D-alanine + di-trans,octa-cis-undecaprenyl phosphate = di-trans,octa-cis-undecaprenyl diphospho-N-acetyl-alpha-D-muramoyl-L-alanyl-D-glutamyl-meso-2,6-diaminopimeloyl-D-alanyl-D-alanine + UMP. The protein operates within cell wall biogenesis; peptidoglycan biosynthesis. Catalyzes the initial step of the lipid cycle reactions in the biosynthesis of the cell wall peptidoglycan: transfers peptidoglycan precursor phospho-MurNAc-pentapeptide from UDP-MurNAc-pentapeptide onto the lipid carrier undecaprenyl phosphate, yielding undecaprenyl-pyrophosphoryl-MurNAc-pentapeptide, known as lipid I. This is Phospho-N-acetylmuramoyl-pentapeptide-transferase from Chromohalobacter salexigens (strain ATCC BAA-138 / DSM 3043 / CIP 106854 / NCIMB 13768 / 1H11).